The primary structure comprises 579 residues: Folliculin (579 aa).

The interval 30–81 is disordered; it reads PQGDGNEDSPGQGEQAEEEEGGIQMNSRMRAHSPAEGASVESSSPGPKKSDM. Phosphoserine occurs at positions 62 and 73. In terms of domain architecture, uDENN FLCN/SMCR8-type spans 86 to 242; it reads RSLAAGHPGY…RNGNAARSLT (157 aa). Residues 210–220 form an essential for interaction with LDHA region; the sequence is AEQFGCPQRAQ. Residues 287 to 310 are a coiled coil; the sequence is EKLADLEEESESWDNSEAEEEEKA. Positions 294 to 308 are enriched in acidic residues; the sequence is EESESWDNSEAEEEE. The interval 294-337 is disordered; that stretch reads EESESWDNSEAEEEEKAPVLPESTEGRELTQGPAESSSLSGCGS. Phosphoserine is present on Ser302. Polar residues predominate over residues 326 to 336; it reads PAESSSLSGCG. Positions 339 to 491 constitute a cDENN FLCN/SMCR8-type domain; sequence QPRKLPVFKS…ILNKIEAALT (153 aa). Residues Ser406, Ser537, and Ser542 each carry the phosphoserine; by ULK1 modification. A dDENN FLCN/SMCR8-type domain is found at 493-558; it reads QNLSVDVVDQ…LLKFWMTGLS (66 aa). Phosphoserine is present on Ser571.

The protein belongs to the folliculin family. In terms of assembly, interacts (via C-terminus) with FNIP1 or FNIP2 (via C-terminus). Component of the lysosomal folliculin complex (LFC), composed of FLCN, FNIP1 (or FNIP2), RagA/RRAGA or RagB/RRAGB GDP-bound, RagC/RRAGC or RagD/RRAGD GTP-bound, and Ragulator. Interaction with FNIP1 or FNIP2 mediates indirect interaction with the PRKAA1, PRKAB1 and PRKAG1 subunits of 5'-AMP-activated protein kinase (AMPK). Interacts with HSP90AA1 in the presence of FNIP1. Interacts with HSP70, STUB1, CDC37, AHSA1, CCT2, STIP1, PTGES3 and PPP5C. Interacts with GABARAP; interaction takes place in the presence of FNIP1 and/or FNIP2. Interacts with RILP; the interaction is direct and promotes association between RILP and RAB34. Interacts with KIF3A and KIF3B. Interacts with lactate dehydrogenase LDHA, but not LDHB; the interaction is direct, may preferentially bind LDHA dimers rather than tetramers, and regulates LDHA activity, acting as an uncompetitive inhibitor. Post-translationally, phosphorylation by ULK1 modulates the interaction with GABARAP and is required to regulate autophagy. Expressed in most tissues tested, including skin, lung, kidney, heart, testis and stomach.

It is found in the lysosome membrane. It localises to the cytoplasm. The protein localises to the cytosol. Its subcellular location is the cell projection. The protein resides in the cilium. It is found in the cytoskeleton. It localises to the microtubule organizing center. The protein localises to the centrosome. Its subcellular location is the spindle. The protein resides in the nucleus. GTPase-activating activity is inhibited in the folliculin complex (LFC), which stabilizes the GDP-bound state of RagA/RRAGA (or RagB/RRAGB), because Arg-164 is located far from the RagC/RRAGC or RagD/RRAGD nucleotide pocket. Disassembly of the LFC complex upon amino acid restimulation liberates the GTPase-activating activity. Its function is as follows. Multi-functional protein, involved in both the cellular response to amino acid availability and in the regulation of glycolysis. GTPase-activating protein that plays a key role in the cellular response to amino acid availability through regulation of the non-canonical mTORC1 signaling cascade controlling the MiT/TFE factors TFEB and TFE3. Activates mTORC1 by acting as a GTPase-activating protein: specifically stimulates GTP hydrolysis by RagC/RRAGC or RagD/RRAGD, promoting the conversion to the GDP-bound state of RagC/RRAGC or RagD/RRAGD, and thereby activating the kinase activity of mTORC1. The GTPase-activating activity is inhibited during starvation and activated in presence of nutrients. Acts as a key component for non-canonical mTORC1-dependent control of the MiT/TFE factors TFEB and TFE3, while it is not involved in mTORC1-dependent phosphorylation of canonical RPS6KB1/S6K1 and EIF4EBP1/4E-BP1. In low-amino acid conditions, the lysosomal folliculin complex (LFC) is formed on the membrane of lysosomes, which inhibits the GTPase-activating activity of FLCN, inactivates mTORC1 and maximizes nuclear translocation of TFEB and TFE3. Upon amino acid restimulation, RagA/RRAGA (or RagB/RRAGB) nucleotide exchange promotes disassembly of the LFC complex and liberates the GTPase-activating activity of FLCN, leading to activation of mTORC1 and subsequent cytoplasmic retention of TFEB and TFE3. Indirectly acts as a positive regulator of Wnt signaling by promoting mTOR-dependent cytoplasmic retention of MiT/TFE factor TFE3. Required for the exit of hematopoietic stem cell from pluripotency by promoting mTOR-dependent cytoplasmic retention of TFE3, thereby increasing Wnt signaling. Acts as an inhibitor of browning of adipose tissue by regulating mTOR-dependent cytoplasmic retention of TFE3. Involved in the control of embryonic stem cells differentiation; together with LAMTOR1 it is necessary to recruit and activate RagC/RRAGC and RagD/RRAGD at the lysosomes, and to induce exit of embryonic stem cells from pluripotency via non-canonical, mTOR-independent TFE3 inactivation. In response to flow stress, regulates STK11/LKB1 accumulation and mTORC1 activation through primary cilia: may act by recruiting STK11/LKB1 to primary cilia for activation of AMPK resided at basal bodies, causing mTORC1 down-regulation. Together with FNIP1 and/or FNIP2, regulates autophagy: following phosphorylation by ULK1, interacts with GABARAP and promotes autophagy. Required for starvation-induced perinuclear clustering of lysosomes by promoting association of RILP with its effector RAB34. Regulates glycolysis by binding to lactate dehydrogenase LDHA, acting as an uncompetitive inhibitor. This chain is Folliculin, found in Homo sapiens (Human).